We begin with the raw amino-acid sequence, 377 residues long: Terpene synthase 1 (377 aa).

Residues 81–86 (DDALDA) carry the DDxx(x)D/E motif motif. Positions 221 to 229 (NDLVSYEKE) match the NDxxSxxxD/E motif motif. Residues 326-359 (RKQSSSPNLTNSISIPTNNTNNSNNITSSPNKKQ) are disordered. Residues 335–356 (TNSISIPTNNTNNSNNITSSPN) show a composition bias toward low complexity.

Belongs to the terpene synthase family.

It catalyses the reaction (2E,6E)-farnesyl diphosphate = (2S,3R,6S,9S)-(-)-protoillud-7-ene + diphosphate. Functionally, terpene synthase that converts its substrate farnesyl diphosphate (FPP) into the sesquiterpene protoillud-7-ene. In Dictyostelium purpureum (Slime mold), this protein is Terpene synthase 1.